The primary structure comprises 432 residues: Phosphomethylpyrimidine synthase (432 aa).

Substrate contacts are provided by residues Asn-66, Met-95, Tyr-124, His-163, 185-187 (SRG), 226-229 (DGLR), and Glu-265. Zn(2+) is bound at residue His-269. Tyr-292 provides a ligand contact to substrate. Residue His-333 participates in Zn(2+) binding. 3 residues coordinate [4Fe-4S] cluster: Cys-409, Cys-412, and Cys-416.

The protein belongs to the ThiC family. The cofactor is [4Fe-4S] cluster.

The enzyme catalyses 5-amino-1-(5-phospho-beta-D-ribosyl)imidazole + S-adenosyl-L-methionine = 4-amino-2-methyl-5-(phosphooxymethyl)pyrimidine + CO + 5'-deoxyadenosine + formate + L-methionine + 3 H(+). It functions in the pathway cofactor biosynthesis; thiamine diphosphate biosynthesis. Catalyzes the synthesis of the hydroxymethylpyrimidine phosphate (HMP-P) moiety of thiamine from aminoimidazole ribotide (AIR) in a radical S-adenosyl-L-methionine (SAM)-dependent reaction. The polypeptide is Phosphomethylpyrimidine synthase (Moorella thermoacetica (strain ATCC 39073 / JCM 9320)).